The sequence spans 429 residues: Gap junction gamma-2 protein (429 aa).

Residues 1-25 (MTNMSWSFLTRLLEEIHNHSTFVGK) lie on the Cytoplasmic side of the membrane. A helical membrane pass occupies residues 26–46 (VWLTVLVVFRIVLTAVGGESI). Topologically, residues 47-78 (YSDEQTKFTCNTRQPGCDNVCYDAFAPLSHVR) are extracellular. The helical transmembrane segment at 79 to 99 (FWVFQIVVISTPSVMYLGYAV) threads the bilayer. Residues 100-214 (HRLARASQDE…EGLMRVYVAQ (115 aa)) lie on the Cytoplasmic side of the membrane. The interval 106-200 (SQDERRRASR…GPAGQHDGRR (95 aa)) is disordered. Residues 112-123 (RASRRRPSRRAP) show a composition bias toward basic residues. Pro residues predominate over residues 124 to 138 (RPPLPLPPPPHPGWP). Acidic residues predominate over residues 142 to 173 (DLGEEEPMLGLGEEDEDPGVAEGLGEDEEAED). A helical transmembrane segment spans residues 215-235 (LVARAAFEVAFLVGQYLLYGF). Topologically, residues 236–263 (EVRPFFACSRQPCPHVVDCFVSRPTEKT) are extracellular. A helical transmembrane segment spans residues 264–284 (VFLLVMYVVSCLCLLLNLCEM). Residues 285–429 (AHLGLGNAQD…SREGKTTVWI (145 aa)) are Cytoplasmic-facing. Disordered regions lie at residues 296 to 316 (VRGR…PPCA) and 361 to 429 (LGDL…TVWI). The segment covering 303–316 (PASPGPMPRPPPCA) has biased composition (pro residues). Ser366 carries the phosphoserine modification. Low complexity predominate over residues 372-395 (LPANARGPPKPGAPASGSGSATSG).

This sequence belongs to the connexin family. Gamma-type subfamily. A connexon is composed of a hexamer of connexins. Interacts with TJP1.

It is found in the cell membrane. The protein localises to the cell junction. It localises to the gap junction. One gap junction consists of a cluster of closely packed pairs of transmembrane channels, the connexons, through which materials of low MW diffuse from one cell to a neighboring cell. May play a role in myelination in central and peripheral nervous systems. This Bos taurus (Bovine) protein is Gap junction gamma-2 protein (GJC2).